Consider the following 315-residue polypeptide: L-lactate dehydrogenase (315 aa).

Residues valine 16, aspartate 37, and glycine 81–alanine 82 each bind NAD(+). Substrate-binding positions include glutamine 84, arginine 90, and asparagine 122–aspartate 125. NAD(+)-binding positions include valine 120–asparagine 122 and serine 145. Aspartate 150–arginine 153 is a substrate binding site. Arginine 155 and histidine 170 together coordinate beta-D-fructose 1,6-bisphosphate. Histidine 177 (proton acceptor) is an active-site residue. The residue at position 224 (tyrosine 224) is a Phosphotyrosine. Residue threonine 233 participates in substrate binding.

This sequence belongs to the LDH/MDH superfamily. LDH family. In terms of assembly, homotetramer.

It is found in the cytoplasm. The enzyme catalyses (S)-lactate + NAD(+) = pyruvate + NADH + H(+). The protein operates within fermentation; pyruvate fermentation to lactate; (S)-lactate from pyruvate: step 1/1. With respect to regulation, allosterically activated by fructose 1,6-bisphosphate (FBP). Catalyzes the conversion of lactate to pyruvate. The polypeptide is L-lactate dehydrogenase (Treponema denticola (strain ATCC 35405 / DSM 14222 / CIP 103919 / JCM 8153 / KCTC 15104)).